The sequence spans 102 residues: MSKQKIRIRLKAFDHTILDQSAEKIVETAKSTGAKVVGPVPLPTEKDVITILRAVHKYKDSREQFEVRTHKRLIDIVNPSPKTVDALMRLNLPAGVDIEIKL.

It belongs to the universal ribosomal protein uS10 family. As to quaternary structure, part of the 30S ribosomal subunit.

Its function is as follows. Involved in the binding of tRNA to the ribosomes. The polypeptide is Small ribosomal subunit protein uS10 (Clostridium perfringens (strain ATCC 13124 / DSM 756 / JCM 1290 / NCIMB 6125 / NCTC 8237 / Type A)).